Reading from the N-terminus, the 233-residue chain is MFRIVKWLIALPVGIFIFFNAYVYGNIITYRAVAPHRTAFMSMRMKQFEQEGRDVALDYRWVPYNRISVNLKKALIASEDARFAGHGGFDWGGIQNAIRRNRNSGKVKAGGSTISQQLAKNLFLNESRSYIRKGEEAAITAMMEAVTDKDRIFELYLNSIEWHYGVFGAEAASRYFYQIPAAKLSKQQAAKLTARVPAPLYYADHPKSKRLRNKTNIVLRRMGSAELPESDTD.

Residues 8-28 form a helical membrane-spanning segment; it reads LIALPVGIFIFFNAYVYGNII.

It belongs to the glycosyltransferase 51 family.

The protein resides in the cell inner membrane. It carries out the reaction [GlcNAc-(1-&gt;4)-Mur2Ac(oyl-L-Ala-gamma-D-Glu-L-Lys-D-Ala-D-Ala)](n)-di-trans,octa-cis-undecaprenyl diphosphate + beta-D-GlcNAc-(1-&gt;4)-Mur2Ac(oyl-L-Ala-gamma-D-Glu-L-Lys-D-Ala-D-Ala)-di-trans,octa-cis-undecaprenyl diphosphate = [GlcNAc-(1-&gt;4)-Mur2Ac(oyl-L-Ala-gamma-D-Glu-L-Lys-D-Ala-D-Ala)](n+1)-di-trans,octa-cis-undecaprenyl diphosphate + di-trans,octa-cis-undecaprenyl diphosphate + H(+). It functions in the pathway cell wall biogenesis; peptidoglycan biosynthesis. Peptidoglycan polymerase that catalyzes glycan chain elongation from lipid-linked precursors. The protein is Biosynthetic peptidoglycan transglycosylase of Neisseria meningitidis serogroup C (strain 053442).